The chain runs to 338 residues: MVDDERVVSPETADDHEDSVEKSLRPQVLAQYIGQEPIKHELSVYIQAAKQREESLDHVLLYGPPGLGKTTLAMVIANEMGVQIRTTSGPAIEKPGDLVALLNELQPGDILFIDEIHRLPKIVEEMLYSAMEDFYIDIVVGQGPTAHPVHFPLPPFTLIGATTRAGLLSAPLRDRFGIVEHMAYYETTDLQEIVLRSADIFHTAIATEGAHEIALRSRGTPRIANRLLKRIRDFAEVAPDHDQIDLAIVDHALDLLRVDSAGLDATDIKLLETMIDYYNGGPVGLNTLAANIGEETETVAAMYEPYLLQRGYLKRTARGRVVTATGYQHLGRTMPDNN.

Residues 1–22 (MVDDERVVSPETADDHEDSVEK) form a disordered region. The large ATPase domain (RuvB-L) stretch occupies residues 4–185 (DERVVSPETA…FGIVEHMAYY (182 aa)). ATP contacts are provided by residues leucine 24, arginine 25, glycine 66, lysine 69, threonine 70, threonine 71, 132 to 134 (EDF), arginine 175, tyrosine 185, and arginine 222. Residue threonine 70 participates in Mg(2+) binding. A small ATPAse domain (RuvB-S) region spans residues 186–257 (ETTDLQEIVL…IVDHALDLLR (72 aa)). The interval 260-338 (SAGLDATDIK…HLGRTMPDNN (79 aa)) is head domain (RuvB-H). Arginine 315 and arginine 320 together coordinate DNA.

It belongs to the RuvB family. In terms of assembly, homohexamer. Forms an RuvA(8)-RuvB(12)-Holliday junction (HJ) complex. HJ DNA is sandwiched between 2 RuvA tetramers; dsDNA enters through RuvA and exits via RuvB. An RuvB hexamer assembles on each DNA strand where it exits the tetramer. Each RuvB hexamer is contacted by two RuvA subunits (via domain III) on 2 adjacent RuvB subunits; this complex drives branch migration. In the full resolvosome a probable DNA-RuvA(4)-RuvB(12)-RuvC(2) complex forms which resolves the HJ.

Its subcellular location is the cytoplasm. It carries out the reaction ATP + H2O = ADP + phosphate + H(+). Its function is as follows. The RuvA-RuvB-RuvC complex processes Holliday junction (HJ) DNA during genetic recombination and DNA repair, while the RuvA-RuvB complex plays an important role in the rescue of blocked DNA replication forks via replication fork reversal (RFR). RuvA specifically binds to HJ cruciform DNA, conferring on it an open structure. The RuvB hexamer acts as an ATP-dependent pump, pulling dsDNA into and through the RuvAB complex. RuvB forms 2 homohexamers on either side of HJ DNA bound by 1 or 2 RuvA tetramers; 4 subunits per hexamer contact DNA at a time. Coordinated motions by a converter formed by DNA-disengaged RuvB subunits stimulates ATP hydrolysis and nucleotide exchange. Immobilization of the converter enables RuvB to convert the ATP-contained energy into a lever motion, pulling 2 nucleotides of DNA out of the RuvA tetramer per ATP hydrolyzed, thus driving DNA branch migration. The RuvB motors rotate together with the DNA substrate, which together with the progressing nucleotide cycle form the mechanistic basis for DNA recombination by continuous HJ branch migration. Branch migration allows RuvC to scan DNA until it finds its consensus sequence, where it cleaves and resolves cruciform DNA. The chain is Holliday junction branch migration complex subunit RuvB from Levilactobacillus brevis (strain ATCC 367 / BCRC 12310 / CIP 105137 / JCM 1170 / LMG 11437 / NCIMB 947 / NCTC 947) (Lactobacillus brevis).